Here is a 310-residue protein sequence, read N- to C-terminus: tRNA pseudouridine synthase B (310 aa).

D49 serves as the catalytic Nucleophile.

The protein belongs to the pseudouridine synthase TruB family. Type 1 subfamily.

The enzyme catalyses uridine(55) in tRNA = pseudouridine(55) in tRNA. Responsible for synthesis of pseudouridine from uracil-55 in the psi GC loop of transfer RNAs. The chain is tRNA pseudouridine synthase B from Sinorhizobium medicae (strain WSM419) (Ensifer medicae).